Reading from the N-terminus, the 145-residue chain is Phosphoribosyl-AMP cyclohydrolase (145 aa).

Position 87 (aspartate 87) interacts with Mg(2+). Cysteine 88 lines the Zn(2+) pocket. Mg(2+) is bound by residues aspartate 89 and aspartate 91. The Zn(2+) site is built by cysteine 104 and cysteine 111.

Belongs to the PRA-CH family. Homodimer. Mg(2+) serves as cofactor. Zn(2+) is required as a cofactor.

The protein resides in the cytoplasm. It carries out the reaction 1-(5-phospho-beta-D-ribosyl)-5'-AMP + H2O = 1-(5-phospho-beta-D-ribosyl)-5-[(5-phospho-beta-D-ribosylamino)methylideneamino]imidazole-4-carboxamide. It functions in the pathway amino-acid biosynthesis; L-histidine biosynthesis; L-histidine from 5-phospho-alpha-D-ribose 1-diphosphate: step 3/9. Its function is as follows. Catalyzes the hydrolysis of the adenine ring of phosphoribosyl-AMP. The protein is Phosphoribosyl-AMP cyclohydrolase of Nitrobacter winogradskyi (strain ATCC 25391 / DSM 10237 / CIP 104748 / NCIMB 11846 / Nb-255).